The sequence spans 516 residues: Endoglucanase 17 (516 aa).

Residues 1 to 29 (MALLLVSSSSSYALRVTIFLSFFFFLCNG) form the signal peptide. Aspartate 105 serves as the catalytic Nucleophile. Residues histidine 433, aspartate 484, and glutamate 493 contribute to the active site.

Belongs to the glycosyl hydrolase 9 (cellulase E) family.

The protein localises to the secreted. It catalyses the reaction Endohydrolysis of (1-&gt;4)-beta-D-glucosidic linkages in cellulose, lichenin and cereal beta-D-glucans.. The sequence is that of Endoglucanase 17 from Arabidopsis thaliana (Mouse-ear cress).